Here is a 172-residue protein sequence, read N- to C-terminus: MTYFVLFLGLCFVLGGLAVASNPSPYYGVVGLVLASVAGCGWLLSLGISFVSLVLFMVYLGGMLVVFVYSVSLAADPFPEAWGDWRVVGYGMGFVAVLVAGVVVGGFECWDLGMVTVDSVGMFSVRLDFGGVAMFYSCGVGMFLAAGWGLLLTLFVVLELVRGLTRGAIRAV.

The next 5 membrane-spanning stretches (helical) occupy residues 1–21 (MTYF…AVAS), 27–47 (YGVV…LSLG), 48–68 (ISFV…VVFV), 87–107 (VVGY…VGGF), and 138–158 (CGVG…FVVL).

Belongs to the complex I subunit 6 family.

It localises to the mitochondrion membrane. The catalysed reaction is a ubiquinone + NADH + 5 H(+)(in) = a ubiquinol + NAD(+) + 4 H(+)(out). In terms of biological role, core subunit of the mitochondrial membrane respiratory chain NADH dehydrogenase (Complex I) that is believed to belong to the minimal assembly required for catalysis. Complex I functions in the transfer of electrons from NADH to the respiratory chain. The immediate electron acceptor for the enzyme is believed to be ubiquinone. This chain is NADH-ubiquinone oxidoreductase chain 6 (MT-ND6), found in Uria aalge (Common mure).